A 792-amino-acid polypeptide reads, in one-letter code: Ribonucleoside-diphosphate reductase large subunit (792 aa).

The 92-residue stretch at 1-92 (MHVIKRDGRQ…VSNLHKEAKK (92 aa)) folds into the ATP-cone domain. ATP contacts are provided by residues 5 to 6 (KR), 11 to 17 (ERVMFDK), T53, and D57. K17 bears the N6-acetyllysine mark. The GDP site is built by S202 and S217. C218 and C444 are oxidised to a cystine. Residues 226–228 (DSI), K243, R256, and 263–264 (AG) contribute to the dTTP site. K376 bears the N6-acetyllysine mark. The active-site Proton acceptor is S427. Catalysis depends on C429, which acts as the Cysteine radical intermediate. Residues E431 and 604–607 (TAST) contribute to the GDP site. Residue E431 is the Proton acceptor of the active site. Residue T751 is modified to Phosphothreonine.

Belongs to the ribonucleoside diphosphate reductase large chain family. In terms of assembly, heterodimer of a large and a small subunit. Interacts with RRM2B. Interacts with AHCYL1 which inhibits its activity.

Its subcellular location is the cytoplasm. It carries out the reaction a 2'-deoxyribonucleoside 5'-diphosphate + [thioredoxin]-disulfide + H2O = a ribonucleoside 5'-diphosphate + [thioredoxin]-dithiol. Under complex allosteric control mediated by deoxynucleoside triphosphates and ATP binding to separate specificity and activation sites on the M1 subunit. The type of nucleotide bound at the specificity site determines substrate preference. It seems probable that ATP makes the enzyme reduce CDP and UDP, dGTP favors ADP reduction and dTTP favors GDP reduction. Stimulated by ATP and inhibited by dATP binding to the activity site, the dATP inhibition is mediated by AHCYL1 which stabilizes dATP in the site. In terms of biological role, provides the precursors necessary for DNA synthesis. Catalyzes the biosynthesis of deoxyribonucleotides from the corresponding ribonucleotides. This Pongo abelii (Sumatran orangutan) protein is Ribonucleoside-diphosphate reductase large subunit (RRM1).